We begin with the raw amino-acid sequence, 740 residues long: MPSSSFTTGLALGAGALVGANAFVAPTAKTTNLRAPTQEASLQVAASQQTEQPAPSTSALPWAFGAGACLALAAGGQRKQRSAIAQGRATVLPTASPVVRRALDQSSRYADLSLSEEQLIANGKHVLVSYIMKPKAGYDYLATAAHFAAESSTGTNVNVCTTDDFTKSVDALVYYIDPENEECKIAYPNLLFDRNIIDGRAMMCSVLTLTIGNNQGMGDVEYGKIYDIYFPPSYLRLFDGPSCNIIDMWRILGRGTTDGGLVVGTIIKPKLGLQPKPFGEACYAFWQGGDFIKNDEPQGNQPFCQMNEVIPEVVKAMRAAIKETGVAKLFSANITADDPAEMIARGKYVLAQFGPLSENCAFLVDGYVAGGTAVTVARRNFPKQFLHYHRAGHGSVTSPQTQRGYTAFVHTKLSRVQGASGIHVGTMSFGKMEGDASDKNIAFMLQDDAADGPYYHQTWEGMAETTPIISGGMNALRLPAFFENLGHSNVILTAGGGAFGHKDGPKQGATSCRQGEEAWKLWKAGVYGSVSLSDGVIEYAKTHEEIKGAFLTFQKDADQIYPGWKEKLGYTGESSVQAASFDWKKKAAAAAFAGSSTQARTVGVQMRHGYDDVATNTFYYDKRLESFGQQEFFNQVGYLPDGTPMNTAGNLTNHPETIGPDPHINGSELPQAVFVNSIGYLPDGTAMNQAGNAVNHPETMGPDLHMAGSPLPPPLKGYLNDIGYLSDGTPMATAGNLSNH.

A chloroplast-targeting transit peptide spans 1-55 (MPSSSFTTGLALGAGALVGANAFVAPTAKTTNLRAPTQEASLQVAASQQTEQPAP). The helical transmembrane segment at 56-76 (STSALPWAFGAGACLALAAGG) threads the bilayer. Position 213 (asparagine 213) interacts with substrate. The Proton acceptor role is filled by lysine 268. Position 270 (lysine 270) interacts with substrate. 3 residues coordinate Mg(2+): lysine 293, aspartate 295, and glutamate 296. At lysine 293 the chain carries N6-carboxylysine. Residue histidine 389 is the Proton acceptor of the active site. Arginine 390, histidine 423, and serine 470 together coordinate substrate.

This sequence belongs to the RuBisCO large chain family. Type II subfamily. As to quaternary structure, homodimer. It depends on Mg(2+) as a cofactor.

Its subcellular location is the plastid. It localises to the chloroplast membrane. It carries out the reaction 2 (2R)-3-phosphoglycerate + 2 H(+) = D-ribulose 1,5-bisphosphate + CO2 + H2O. It catalyses the reaction D-ribulose 1,5-bisphosphate + O2 = 2-phosphoglycolate + (2R)-3-phosphoglycerate + 2 H(+). Functionally, ruBisCO catalyzes two reactions: the carboxylation of D-ribulose 1,5-bisphosphate, the primary event in carbon dioxide fixation, as well as the oxidative fragmentation of the pentose substrate. Both reactions occur simultaneously and in competition at the same active site. In Heterocapsa triquetra (Dinoflagellate), this protein is Ribulose bisphosphate carboxylase, chloroplastic (rbcL).